The following is a 421-amino-acid chain: Imidazolonepropionase (421 aa).

2 residues coordinate Fe(3+): histidine 81 and histidine 83. 2 residues coordinate Zn(2+): histidine 81 and histidine 83. 3 residues coordinate 4-imidazolone-5-propanoate: arginine 90, tyrosine 153, and histidine 186. Tyrosine 153 provides a ligand contact to N-formimidoyl-L-glutamate. Histidine 251 provides a ligand contact to Fe(3+). Histidine 251 provides a ligand contact to Zn(2+). Glutamate 254 contributes to the 4-imidazolone-5-propanoate binding site. Aspartate 326 lines the Fe(3+) pocket. A Zn(2+)-binding site is contributed by aspartate 326. N-formimidoyl-L-glutamate-binding residues include asparagine 328 and glycine 330. Serine 331 lines the 4-imidazolone-5-propanoate pocket.

This sequence belongs to the metallo-dependent hydrolases superfamily. HutI family. Requires Zn(2+) as cofactor. Fe(3+) is required as a cofactor.

It is found in the cytoplasm. The catalysed reaction is 4-imidazolone-5-propanoate + H2O = N-formimidoyl-L-glutamate. It functions in the pathway amino-acid degradation; L-histidine degradation into L-glutamate; N-formimidoyl-L-glutamate from L-histidine: step 3/3. Its function is as follows. Catalyzes the hydrolytic cleavage of the carbon-nitrogen bond in imidazolone-5-propanoate to yield N-formimidoyl-L-glutamate. It is the third step in the universal histidine degradation pathway. The protein is Imidazolonepropionase of Streptococcus pyogenes serotype M28 (strain MGAS6180).